A 414-amino-acid chain; its full sequence is Glutamyl-tRNA reductase (414 aa).

Substrate is bound by residues 49-52 (TCNR), Ser108, 113-115 (EPQ), and Gln119. Cys50 serves as the catalytic Nucleophile. Position 188–193 (188–193 (GAGQTG)) interacts with NADP(+).

Belongs to the glutamyl-tRNA reductase family. In terms of assembly, homodimer.

The enzyme catalyses (S)-4-amino-5-oxopentanoate + tRNA(Glu) + NADP(+) = L-glutamyl-tRNA(Glu) + NADPH + H(+). The protein operates within porphyrin-containing compound metabolism; protoporphyrin-IX biosynthesis; 5-aminolevulinate from L-glutamyl-tRNA(Glu): step 1/2. Functionally, catalyzes the NADPH-dependent reduction of glutamyl-tRNA(Glu) to glutamate 1-semialdehyde (GSA). This chain is Glutamyl-tRNA reductase, found in Francisella tularensis subsp. holarctica (strain FTNF002-00 / FTA).